The sequence spans 97 residues: Co-chaperonin GroES (97 aa).

This sequence belongs to the GroES chaperonin family. In terms of assembly, heptamer of 7 subunits arranged in a ring. Interacts with the chaperonin GroEL.

The protein localises to the cytoplasm. In terms of biological role, together with the chaperonin GroEL, plays an essential role in assisting protein folding. The GroEL-GroES system forms a nano-cage that allows encapsulation of the non-native substrate proteins and provides a physical environment optimized to promote and accelerate protein folding. GroES binds to the apical surface of the GroEL ring, thereby capping the opening of the GroEL channel. This chain is Co-chaperonin GroES, found in Yersinia enterocolitica.